Consider the following 497-residue polypeptide: tRNA-2-methylthio-N(6)-dimethylallyladenosine synthase (497 aa).

The interval 1-50 (MTGTSNIPTHGKEHKDAPALLPLPAPNPHHTHAAHPGNPSHDRPPSRGKL) is disordered. The MTTase N-terminal domain occupies 48 to 165 (GKLFIKTHGC…LPDMIRARRE (118 aa)). Cysteine 57, cysteine 94, cysteine 128, cysteine 202, cysteine 206, and cysteine 209 together coordinate [4Fe-4S] cluster. Residues 188–430 (RAEGPSAFVS…QKHINTYAAD (243 aa)) form the Radical SAM core domain. Positions 433-496 (KRMIGTVQTV…SNSLRGRVHT (64 aa)) constitute a TRAM domain.

The protein belongs to the methylthiotransferase family. MiaB subfamily. In terms of assembly, monomer. The cofactor is [4Fe-4S] cluster.

It is found in the cytoplasm. It catalyses the reaction N(6)-dimethylallyladenosine(37) in tRNA + (sulfur carrier)-SH + AH2 + 2 S-adenosyl-L-methionine = 2-methylsulfanyl-N(6)-dimethylallyladenosine(37) in tRNA + (sulfur carrier)-H + 5'-deoxyadenosine + L-methionine + A + S-adenosyl-L-homocysteine + 2 H(+). Catalyzes the methylthiolation of N6-(dimethylallyl)adenosine (i(6)A), leading to the formation of 2-methylthio-N6-(dimethylallyl)adenosine (ms(2)i(6)A) at position 37 in tRNAs that read codons beginning with uridine. In Xylella fastidiosa (strain 9a5c), this protein is tRNA-2-methylthio-N(6)-dimethylallyladenosine synthase.